Consider the following 206-residue polypeptide: Ribosome maturation factor RimP (206 aa).

It belongs to the RimP family.

The protein resides in the cytoplasm. Required for maturation of 30S ribosomal subunits. The sequence is that of Ribosome maturation factor RimP from Paracoccus denitrificans (strain Pd 1222).